Consider the following 184-residue polypeptide: Large ribosomal subunit protein uL5 (184 aa).

Belongs to the universal ribosomal protein uL5 family. Part of the 50S ribosomal subunit; part of the 5S rRNA/L5/L18/L25 subcomplex. Contacts the 5S rRNA and the P site tRNA. Forms a bridge to the 30S subunit in the 70S ribosome.

Functionally, this is one of the proteins that bind and probably mediate the attachment of the 5S RNA into the large ribosomal subunit, where it forms part of the central protuberance. In the 70S ribosome it contacts protein S13 of the 30S subunit (bridge B1b), connecting the 2 subunits; this bridge is implicated in subunit movement. Contacts the P site tRNA; the 5S rRNA and some of its associated proteins might help stabilize positioning of ribosome-bound tRNAs. This chain is Large ribosomal subunit protein uL5, found in Thermotoga maritima (strain ATCC 43589 / DSM 3109 / JCM 10099 / NBRC 100826 / MSB8).